The primary structure comprises 89 residues: Ubiquinol-cytochrome-c reductase complex assembly factor 3 (89 aa).

The Mitochondrial matrix segment spans residues 1–7 (MEVARKA). Residues 8-28 (LVAVAVLGGGAGVGSILFALV) form a helical membrane-spanning segment. A mediates lipid-binding region spans residues 23–80 (ILFALVTPGELQKQSMLQEMPERDSRRRDEAVRTTELVMATLKDAAATKENVAWRRNW). At 29–89 (TPGELQKQSM…WTVSGDGRSA (61 aa)) the chain is on the mitochondrial intermembrane side.

It belongs to the UQCC3 family. Associates with the ubiquinol-cytochrome c reductase complex (mitochondrial respiratory chain complex III(CIII) or cytochrome b-c1 complex). Interacts with UQCC1. Forms a complex, named COMC, composed of UQCC1, UQCC2; UQCC3 and UQCC4; mediates MT-CYB hemylation and association with the first nuclear-encoded complex III subunit UQCRQ. In terms of processing, probably cleaved by OMA1 under mitochondrial stress conditions.

It is found in the mitochondrion inner membrane. Its function is as follows. Required for the assembly of the ubiquinol-cytochrome c reductase complex (mitochondrial respiratory chain complex III or cytochrome b-c1 complex), mediating cytochrome b recruitment and probably stabilization within the complex. Thereby, plays an important role in ATP production by mitochondria. Cardiolipin-binding protein, it may also control the cardiolipin composition of mitochondria membranes and their morphology. This is Ubiquinol-cytochrome-c reductase complex assembly factor 3 from Mus musculus (Mouse).